Consider the following 427-residue polypeptide: Enolase (427 aa).

Gln163 contacts (2R)-2-phosphoglycerate. Catalysis depends on Glu205, which acts as the Proton donor. Mg(2+)-binding residues include Asp242, Glu285, and Asp312. (2R)-2-phosphoglycerate contacts are provided by Lys337, Arg366, Ser367, and Lys388. Catalysis depends on Lys337, which acts as the Proton acceptor.

This sequence belongs to the enolase family. Mg(2+) serves as cofactor.

The protein localises to the cytoplasm. It is found in the secreted. It localises to the cell surface. It catalyses the reaction (2R)-2-phosphoglycerate = phosphoenolpyruvate + H2O. Its pathway is carbohydrate degradation; glycolysis; pyruvate from D-glyceraldehyde 3-phosphate: step 4/5. Functionally, catalyzes the reversible conversion of 2-phosphoglycerate (2-PG) into phosphoenolpyruvate (PEP). It is essential for the degradation of carbohydrates via glycolysis. In Nitrosospira multiformis (strain ATCC 25196 / NCIMB 11849 / C 71), this protein is Enolase.